Here is a 127-residue protein sequence, read N- to C-terminus: Large ribosomal subunit protein bL17 (127 aa).

Belongs to the bacterial ribosomal protein bL17 family. Part of the 50S ribosomal subunit. Contacts protein L32.

This chain is Large ribosomal subunit protein bL17, found in Lacticaseibacillus casei (strain BL23) (Lactobacillus casei).